The following is a 632-amino-acid chain: 2-hydroxyacyl-CoA lyase 2 (632 aa).

Residues 10–30 (AWGFFSSFLLLAFGTLVAALL) form a helical membrane-spanning segment. Glutamate 98 lines the thiamine diphosphate pocket. Positions 470–550 (DFVGTAAYLV…VMALIGNDAG (81 aa)) are thiamine pyrophosphate binding. Residues aspartate 521 and asparagine 547 each contribute to the Mg(2+) site.

The protein belongs to the TPP enzyme family. Requires Mg(2+) as cofactor. Thiamine diphosphate serves as cofactor.

It localises to the endoplasmic reticulum membrane. It carries out the reaction 2-hydroxyoctadecanoyl-CoA = heptadecanal + formyl-CoA. It catalyses the reaction (2R)-hydroxyhexadecanoyl-CoA = pentadecanal + formyl-CoA. In terms of biological role, endoplasmic reticulum 2-OH acyl-CoA lyase involved in the cleavage (C1 removal) reaction in the fatty acid alpha-oxydation in a thiamine pyrophosphate (TPP)-dependent manner. Involved in the phytosphingosine degradation pathway. The polypeptide is 2-hydroxyacyl-CoA lyase 2 (ILVBL) (Bos taurus (Bovine)).